The following is a 213-amino-acid chain: MELQLAIDLLNKEDAAELANKVKDHVDIVEIGTPIVINEGLPAVQHLNDNVDGVKVLADLKIMDAADYEVSQAVKFGADIVTILGVAEDASIKAAVDEAHKHGKQLLVDMIAVQDLEKRAKDLDDLGADYIAVHTGYDLQAEGQSPLESLRKVKSVISNSKVAVAGGIKPDTIKDIVAENPDLIIVGGGIANADDPVEAAKQCRDIVDAHTKA.

It belongs to the HPS/KGPDC family. HPS subfamily.

It catalyses the reaction D-ribulose 5-phosphate + formaldehyde = D-arabino-hex-3-ulose 6-phosphate. Its pathway is one-carbon metabolism; formaldehyde assimilation via RuMP pathway; D-fructose 6-phosphate from D-ribulose 5-phosphate and formaldehyde: step 1/2. In terms of biological role, catalyzes the condensation of ribulose 5-phosphate with formaldehyde to form 3-hexulose 6-phosphate. This Staphylococcus saprophyticus subsp. saprophyticus (strain ATCC 15305 / DSM 20229 / NCIMB 8711 / NCTC 7292 / S-41) protein is 3-hexulose-6-phosphate synthase 2.